A 451-amino-acid chain; its full sequence is MVEVTRPPTKAWATLSPWLPSRGPDADYWWRLTGQHLSNMVEAAGYSTDQQYVALLFHYHWIVPYMGPAPGPDGNLKWKSLLGVEGSPIEYSWKWNTAAGKPDVRYTTEAIGSFTGTLLDPLNQQATLEMLHRIADFVPTVDLTWTNHFFATLYDHDRSKYAKEAAAGAHFTTTVVVAAEWLKNGLNLKTYFVPRRLGQSDGKLPIALWEESLKQLDPNSESRAAMHEFLNNDPEGKLLSPFMLAVDNVVPEKSRLKFYFQSPHTSFASVRQVMTMGGRIPVPESQLQELRSLIAAVTGLDSDFPEDSEVPCISEYNPAAKDNFVEIDLLLSGYLYYFDIAPGATVPDIKFYTPVRRYGPDDGALAKGIADWMTSRGRGEYSQRYLDMLADLTEHRKLEDGKGMQTYVSCLFKKSHLDVTSYIGPEAFDPARFLKHKAHTTRSTRRRSDSH.

R105, K189, Y191, K257, Y259, and Y422 together coordinate dimethylallyl diphosphate.

This sequence belongs to the tryptophan dimethylallyltransferase family.

It carries out the reaction (8S)-annullatin E + dimethylallyl diphosphate = (8S)-annullatin J + diphosphate. It functions in the pathway secondary metabolite biosynthesis. Its function is as follows. Cytochrome P450 monooxygenase; part of the gene cluster that mediates the biosynthesis of annullatin D, an alkylated aromatic polyketide with a fused dihydrobenzofuran lactone ring system that exhibits potent agonistic activities toward the cannabinoid receptors. Within the pathway, anuH uses dimethylallyl diphosphate (DMAPP) to prenylate (8S)-annullatin E to produce (8S)-annullatin J. Geranyl and farnesyl diphosphate are not consumed by anuH for prenylation. 2-hydroxymethyl-3-pentylphenol, without the hydroxyl group at the side chain, is also accepted by anuH, but only with low conversion yield. The annullatin backbone 2-hydroxymethyl-3-pentylphenol is assembled from one acetyl-CoA starter unit and 5 malonyl-CoA elongation units by cooperation of the highly reducing polyketide synthase anuA, the short-chain dehydrogenase anuB and the oxidoreductase anuC, before being hydroxylated at the C-5 alkyl chain by the cytochrome P450 monooxygenase anuE to form (8S)-annullatin E. The prenyltransferase anuH subsequently installs one isoprenyl group at the benzene ring to form (8S)-annullatin J. Enzymatic or nonenzymatic dihydro-benzofuran ring formation between the prenyl and the phenolic hydroxyl groups in (8S)-annullatin J results in two diastereomers (2S,9S)-annullatin H and compound 12. The intermediate (2S,9S)-annullatin H is then converted to (2S,9S)-annullatin D by the FAD-linked oxidoreductase anuG-catalyzed five-member lactone ring formation. The isomer 12 acts as a substrate for the short-chain dehydrogenase anuF and is oxidized to (2R)-annullatin F, which is subsequently acetylated by an acetyltransferase leading to (2R)-annullatin G formation. The remaining enzymes identified within the cluster, anuD, anuI and anuJ, seem not to be involved in annullatin biosynthesis. This chain is Prenyltransferase anuH, found in Penicillium roqueforti (strain FM164).